Reading from the N-terminus, the 346-residue chain is HLA class I histocompatibility antigen, alpha chain F (346 aa).

An N-terminal signal peptide occupies residues 1–21 (MAPRSLLLLLSGALALTDTWA). The interval 22-111 (GSHSLRYFST…LLRRYNQSEA (90 aa)) is alpha-1. The Extracellular portion of the chain corresponds to 22–305 (GSHSLRYFST…EQSPQPTIPI (284 aa)). Residues N91 and R105 each coordinate a peptide antigen. N107 is a glycosylation site (N-linked (GlcNAc...) asparagine). The segment at 112 to 203 (GSHTLQGMNG…ENGKETLQRA (92 aa)) is alpha-2. 2 disulfides stabilise this stretch: C122–C185 and C224–C280. Positions 164, 168, and 176 each coordinate a peptide antigen. The alpha-3 stretch occupies residues 204–295 (DPPKAHVAHH…GLPQPLILRW (92 aa)). The region spanning 206–296 (PKAHVAHHPI…LPQPLILRWE (91 aa)) is the Ig-like C1-type domain. Residues 296–305 (EQSPQPTIPI) form a connecting peptide region. The chain crosses the membrane as a helical span at residues 306–329 (VGIVAGLVVLGAVVTGAVVAAVMW). Residues 330-346 (RKKSSDRNRGSYSQAAV) lie on the Cytoplasmic side of the membrane. The Sorting signal sequence; Golgi-retention signal; ER-retention signal signature appears at 336–338 (RNR).

This sequence belongs to the MHC class I family. Forms a heterotrimer with B2M and a self-peptide. Binds a diverse number of peptides ranging from 7 to more than 30 amino acids. Peptide-bound HLA-F-B2M interacts with LILRB1 and LILRB2 but not with KIR3DS1 or KIR3DL2; this interaction is direct. The OC form interacts with KIR3DS1, KIR2DS4 and KIR3DL2; this interaction is direct. Interacts with TAP1-TAP2 complex and CALR; this interaction is required for appropriate folding and peptide loading. Interacts with the coat protein complex II and 14-3-3 proteins; these interactions likely control the anterograde ER-to-Golgi transport of HLA-F. HLA-F-B2M complex interacts with the heavy chain of other MHC class I molecules including HLA-A and HLA-E; this interaction may regulate the intracellular trafficking and the stability of peptide-free MHC class I OCs. In terms of processing, N-glycosylated. In terms of tissue distribution, expressed in resting B cells (at protein level). Expressed in secondary lymphoid organs rich in B and T cells such as the tonsils, spleen, and thymus (at protein level). Expressed in the endothelial cells of the tonsils. Expressed on activated lymphoid cells including B cells, NK cells, CD4+ T cells and memory T cells (at protein level). Expressed in motor neurons of spinal cord.

Its subcellular location is the cell membrane. It localises to the early endosome membrane. The protein resides in the lysosome membrane. In terms of biological role, non-classical major histocompatibility class Ib molecule postulated to play a role in immune surveillance, immune tolerance and inflammation. Functions in two forms, as a heterotrimeric complex with B2M/beta-2 microglobulin and a peptide (peptide-bound HLA-F-B2M) and as an open conformer (OC) devoid of peptide and B2M (peptide-free OC). In complex with B2M, presents non-canonical self-peptides carrying post-translational modifications, particularly phosphorylated self-peptides. Peptide-bound HLA-F-B2M acts as a ligand for LILRB1 inhibitory receptor, a major player in maternal-fetal tolerance. Peptide-free OC acts as a ligand for KIR3DS1 and KIR3DL2 receptors. Upon interaction with activating KIR3DS1 receptor on NK cells, triggers NK cell degranulation and anti-viral cytokine production. Through interaction with KIR3DL2 receptor, inhibits NK and T cell effector functions. May interact with other MHC class I OCs to cross-present exogenous viral, tumor or minor histompatibility antigens to cytotoxic CD8+ T cells, triggering effector and memory responses. May play a role in inflammatory responses in the peripheral nervous system. Through interaction with KIR3DL2, may protect motor neurons from astrocyte-induced toxicity. The chain is HLA class I histocompatibility antigen, alpha chain F from Homo sapiens (Human).